Reading from the N-terminus, the 272-residue chain is Exosome complex component Rrp42 (272 aa).

This sequence belongs to the RNase PH family. Rrp42 subfamily. In terms of assembly, component of the archaeal exosome complex. Forms a hexameric ring-like arrangement composed of 3 Rrp41-Rrp42 heterodimers. The hexameric ring associates with a trimer of Rrp4 and/or Csl4 subunits.

Its subcellular location is the cytoplasm. Functionally, non-catalytic component of the exosome, which is a complex involved in RNA degradation. Contributes to the structuring of the Rrp41 active site. The protein is Exosome complex component Rrp42 of Thermococcus onnurineus (strain NA1).